A 464-amino-acid chain; its full sequence is Probable acid phosphatase DDB_G0284753 (464 aa).

A disordered region spans residues 1–29; that stretch reads MFSYFRKSQQKVEENQNGGGGDGRGSGIK. Residues 17–26 show a composition bias toward gly residues; sequence NGGGGDGRGS. The active-site Nucleophile is the His-81. Positions 180 to 202 are disordered; sequence SFTDEQEKSPHHSSFLVKPDNEE. Catalysis depends on Asp-347, which acts as the Proton donor.

This sequence belongs to the histidine acid phosphatase family.

It catalyses the reaction a phosphate monoester + H2O = an alcohol + phosphate. This Dictyostelium discoideum (Social amoeba) protein is Probable acid phosphatase DDB_G0284753.